The chain runs to 173 residues: Large ribosomal subunit protein uL10 (173 aa).

The protein belongs to the universal ribosomal protein uL10 family. As to quaternary structure, part of the ribosomal stalk of the 50S ribosomal subunit. The N-terminus interacts with L11 and the large rRNA to form the base of the stalk. The C-terminus forms an elongated spine to which L12 dimers bind in a sequential fashion forming a multimeric L10(L12)X complex.

Functionally, forms part of the ribosomal stalk, playing a central role in the interaction of the ribosome with GTP-bound translation factors. In Chlorobium phaeobacteroides (strain BS1), this protein is Large ribosomal subunit protein uL10.